The primary structure comprises 943 residues: Isoleucine--tRNA ligase (943 aa).

Positions 58–68 match the 'HIGH' region motif; that stretch reads PYANGNIHIGH. Glu567 contacts L-isoleucyl-5'-AMP. A 'KMSKS' region motif is present at residues 608–612; sequence KMSKS. Lys611 lines the ATP pocket. Residues Cys906, Cys909, Cys926, and Cys929 each coordinate Zn(2+).

This sequence belongs to the class-I aminoacyl-tRNA synthetase family. IleS type 1 subfamily. As to quaternary structure, monomer. Requires Zn(2+) as cofactor.

It is found in the cytoplasm. It catalyses the reaction tRNA(Ile) + L-isoleucine + ATP = L-isoleucyl-tRNA(Ile) + AMP + diphosphate. Catalyzes the attachment of isoleucine to tRNA(Ile). As IleRS can inadvertently accommodate and process structurally similar amino acids such as valine, to avoid such errors it has two additional distinct tRNA(Ile)-dependent editing activities. One activity is designated as 'pretransfer' editing and involves the hydrolysis of activated Val-AMP. The other activity is designated 'posttransfer' editing and involves deacylation of mischarged Val-tRNA(Ile). The chain is Isoleucine--tRNA ligase from Stutzerimonas stutzeri (strain A1501) (Pseudomonas stutzeri).